The chain runs to 152 residues: Ribonuclease H (152 aa).

Positions 1–142 constitute an RNase H type-1 domain; that stretch reads MDSKVVIYTD…ADKLAVQGRE (142 aa). Mg(2+) contacts are provided by D10, E48, D70, and D134.

This sequence belongs to the RNase H family. As to quaternary structure, monomer. Requires Mg(2+) as cofactor.

Its subcellular location is the cytoplasm. The enzyme catalyses Endonucleolytic cleavage to 5'-phosphomonoester.. Its function is as follows. Endonuclease that specifically degrades the RNA of RNA-DNA hybrids. The protein is Ribonuclease H of Rickettsia typhi (strain ATCC VR-144 / Wilmington).